The chain runs to 344 residues: Protein RecA (344 aa).

66 to 73 contacts ATP; the sequence is GPESSGKT.

This sequence belongs to the RecA family.

The protein localises to the cytoplasm. Can catalyze the hydrolysis of ATP in the presence of single-stranded DNA, the ATP-dependent uptake of single-stranded DNA by duplex DNA, and the ATP-dependent hybridization of homologous single-stranded DNAs. It interacts with LexA causing its activation and leading to its autocatalytic cleavage. This Methylobacillus flagellatus protein is Protein RecA.